Reading from the N-terminus, the 277-residue chain is Glycerol-3-phosphate acyltransferase (277 aa).

The next 5 helical transmembrane spans lie at 3-23 (LFIF…AIIV), 55-75 (IMVM…AKFL), 79-99 (PVTV…PVFF), 111-131 (IGAL…TWLL), and 155-175 (LILV…ILVL). A disordered region spans residues 207 to 277 (SPATSAEQEF…PKTKTVKEKE (71 aa)). The segment covering 216–239 (FPGKEVIDTNIDETEKTEQAEAVK) has biased composition (basic and acidic residues). Basic residues-rich tracts occupy residues 240 to 253 (KPKV…AKKT) and 262 to 271 (KPKSTKPKTK).

It belongs to the PlsY family. Probably interacts with PlsX.

It is found in the cell inner membrane. It carries out the reaction an acyl phosphate + sn-glycerol 3-phosphate = a 1-acyl-sn-glycero-3-phosphate + phosphate. Its pathway is lipid metabolism; phospholipid metabolism. Functionally, catalyzes the transfer of an acyl group from acyl-phosphate (acyl-PO(4)) to glycerol-3-phosphate (G3P) to form lysophosphatidic acid (LPA). This enzyme utilizes acyl-phosphate as fatty acyl donor, but not acyl-CoA or acyl-ACP. The protein is Glycerol-3-phosphate acyltransferase of Legionella pneumophila subsp. pneumophila (strain Philadelphia 1 / ATCC 33152 / DSM 7513).